Consider the following 160-residue polypeptide: NADH-quinone oxidoreductase subunit B (160 aa).

[4Fe-4S] cluster-binding residues include cysteine 37, cysteine 38, cysteine 102, and cysteine 132.

The protein belongs to the complex I 20 kDa subunit family. NDH-1 is composed of 14 different subunits. Subunits NuoB, C, D, E, F, and G constitute the peripheral sector of the complex. It depends on [4Fe-4S] cluster as a cofactor.

The protein localises to the cell inner membrane. It catalyses the reaction a quinone + NADH + 5 H(+)(in) = a quinol + NAD(+) + 4 H(+)(out). In terms of biological role, NDH-1 shuttles electrons from NADH, via FMN and iron-sulfur (Fe-S) centers, to quinones in the respiratory chain. Couples the redox reaction to proton translocation (for every two electrons transferred, four hydrogen ions are translocated across the cytoplasmic membrane), and thus conserves the redox energy in a proton gradient. The sequence is that of NADH-quinone oxidoreductase subunit B from Cupriavidus metallidurans (strain ATCC 43123 / DSM 2839 / NBRC 102507 / CH34) (Ralstonia metallidurans).